Consider the following 76-residue polypeptide: Probable insulin-like peptide alpha-type 3 (76 aa).

A signal peptide spans 1 to 18 (MFVLLIILSIILAQVTDA). 3 disulfides stabilise this stretch: Cys-28–Cys-58, Cys-40–Cys-71, and Cys-46–Cys-72.

This sequence belongs to the insulin family.

Its subcellular location is the secreted. This chain is Probable insulin-like peptide alpha-type 3 (ins-23), found in Caenorhabditis elegans.